The primary structure comprises 252 residues: Thiamine thiazole synthase (252 aa).

Residues Ser35, 54 to 55 (EK), Gly62, Val126, and 152 to 154 (HVD) contribute to the NAD(+) site. 2 residues coordinate Fe cation: Asp154 and His169. Met217 serves as a coordination point for NAD(+). Position 227 (Arg227) interacts with glycine.

The protein belongs to the THI4 family. As to quaternary structure, homooctamer; tetramer of dimers. It depends on Fe(2+) as a cofactor.

The enzyme catalyses hydrogen sulfide + glycine + NAD(+) = ADP-5-ethyl-4-methylthiazole-2-carboxylate + nicotinamide + 3 H2O + H(+). It functions in the pathway cofactor biosynthesis; thiamine diphosphate biosynthesis. In terms of biological role, involved in the biosynthesis of the thiazole moiety of thiamine. Catalyzes the conversion of NAD and glycine to adenosine diphosphate 5-(2-hydroxyethyl)-4-methylthiazole-2-carboxylate (ADT), an adenylated thiazole intermediate, using free sulfide as a source of sulfur. The polypeptide is Thiamine thiazole synthase (Pyrococcus abyssi (strain GE5 / Orsay)).